Reading from the N-terminus, the 557-residue chain is CTP synthase (557 aa).

An amidoligase domain region spans residues 1–270; sequence MTKYVFVTGG…DAIICEELKL (270 aa). Residue Ser-13 coordinates CTP. Position 13 (Ser-13) interacts with UTP. Residues 14 to 19 and Asp-71 each bind ATP; that span reads SLGKGI. Mg(2+) is bound by residues Asp-71 and Glu-144. CTP contacts are provided by residues 151–153, 191–196, and Lys-227; these read DIE and KTKPTQ. UTP contacts are provided by residues 191 to 196 and Lys-227; that span reads KTKPTQ. The region spanning 295–547 is the Glutamine amidotransferase type-1 domain; sequence TIGMVGKYVD…VEAALAHHEA (253 aa). An L-glutamine-binding site is contributed by Gly-356. The active-site Nucleophile; for glutamine hydrolysis is Cys-383. Residues 384–387, Glu-407, and Arg-473 contribute to the L-glutamine site; that span reads LGMQ. Active-site residues include His-520 and Glu-522.

This sequence belongs to the CTP synthase family. In terms of assembly, homotetramer.

It catalyses the reaction UTP + L-glutamine + ATP + H2O = CTP + L-glutamate + ADP + phosphate + 2 H(+). The catalysed reaction is L-glutamine + H2O = L-glutamate + NH4(+). The enzyme catalyses UTP + NH4(+) + ATP = CTP + ADP + phosphate + 2 H(+). It participates in pyrimidine metabolism; CTP biosynthesis via de novo pathway; CTP from UDP: step 2/2. Its activity is regulated as follows. Allosterically activated by GTP, when glutamine is the substrate; GTP has no effect on the reaction when ammonia is the substrate. The allosteric effector GTP functions by stabilizing the protein conformation that binds the tetrahedral intermediate(s) formed during glutamine hydrolysis. Inhibited by the product CTP, via allosteric rather than competitive inhibition. Functionally, catalyzes the ATP-dependent amination of UTP to CTP with either L-glutamine or ammonia as the source of nitrogen. Regulates intracellular CTP levels through interactions with the four ribonucleotide triphosphates. The sequence is that of CTP synthase from Paraburkholderia phytofirmans (strain DSM 17436 / LMG 22146 / PsJN) (Burkholderia phytofirmans).